A 126-amino-acid polypeptide reads, in one-letter code: Aspartate 1-decarboxylase (126 aa).

Catalysis depends on S25, which acts as the Schiff-base intermediate with substrate; via pyruvic acid. S25 is modified (pyruvic acid (Ser)). T57 is a substrate binding site. The Proton donor role is filled by Y58. 73 to 75 provides a ligand contact to substrate; the sequence is GSA.

The protein belongs to the PanD family. As to quaternary structure, heterooctamer of four alpha and four beta subunits. Pyruvate serves as cofactor. Is synthesized initially as an inactive proenzyme, which is activated by self-cleavage at a specific serine bond to produce a beta-subunit with a hydroxyl group at its C-terminus and an alpha-subunit with a pyruvoyl group at its N-terminus.

The protein localises to the cytoplasm. It carries out the reaction L-aspartate + H(+) = beta-alanine + CO2. It participates in cofactor biosynthesis; (R)-pantothenate biosynthesis; beta-alanine from L-aspartate: step 1/1. In terms of biological role, catalyzes the pyruvoyl-dependent decarboxylation of aspartate to produce beta-alanine. This is Aspartate 1-decarboxylase from Chromobacterium violaceum (strain ATCC 12472 / DSM 30191 / JCM 1249 / CCUG 213 / NBRC 12614 / NCIMB 9131 / NCTC 9757 / MK).